The sequence spans 208 residues: Translation initiation factor 2 subunit beta (208 aa).

The TRAM domain maps to 144 to 202 (GIEEGKEYTVEISEVGSSGEGRASFRGFTIFVPGTKKGETVKVKIKKIKNDVAIAEVVS).

The protein belongs to the eIF-2-beta/eIF-5 family. As to quaternary structure, heterotrimer composed of an alpha, a beta and a gamma chain.

In terms of biological role, eIF-2 functions in the early steps of protein synthesis by forming a ternary complex with GTP and initiator tRNA. In Thermoplasma volcanium (strain ATCC 51530 / DSM 4299 / JCM 9571 / NBRC 15438 / GSS1), this protein is Translation initiation factor 2 subunit beta (eif2b).